Consider the following 88-residue polypeptide: Small ribosomal subunit protein bS20 (88 aa).

A disordered region spans residues 1 to 27; sequence MANTKQAQKRARQAEQRRQHNASQRSM.

The protein belongs to the bacterial ribosomal protein bS20 family.

Its function is as follows. Binds directly to 16S ribosomal RNA. The polypeptide is Small ribosomal subunit protein bS20 (Chromohalobacter salexigens (strain ATCC BAA-138 / DSM 3043 / CIP 106854 / NCIMB 13768 / 1H11)).